The following is a 200-amino-acid chain: Recombination protein RecR (200 aa).

A C4-type zinc finger spans residues 57–72 (CSECRTFTEEDTCAIC). The Toprim domain maps to 81-176 (GEMCIVESPA…PASRIAHGVP (96 aa)).

The protein belongs to the RecR family.

Functionally, may play a role in DNA repair. It seems to be involved in an RecBC-independent recombinational process of DNA repair. It may act with RecF and RecO. This Aliivibrio fischeri (strain ATCC 700601 / ES114) (Vibrio fischeri) protein is Recombination protein RecR.